The chain runs to 340 residues: Dihydroorotate dehydrogenase (quinone) (340 aa).

Residues 61–65 and Thr85 contribute to the FMN site; that span reads AGLDK. Lys65 contributes to the substrate binding site. Substrate is bound at residue 110 to 114; it reads NRMGF. Positions 138 and 171 each coordinate FMN. Position 171 (Asn171) interacts with substrate. Ser174 serves as the catalytic Nucleophile. Position 176 (Asn176) interacts with substrate. FMN contacts are provided by Lys216 and Thr244. 245 to 246 serves as a coordination point for substrate; sequence NT. Residues Gly267, Gly296, and 317–318 each bind FMN; that span reads YS.

The protein belongs to the dihydroorotate dehydrogenase family. Type 2 subfamily. As to quaternary structure, monomer. Requires FMN as cofactor.

The protein resides in the cell membrane. It catalyses the reaction (S)-dihydroorotate + a quinone = orotate + a quinol. It functions in the pathway pyrimidine metabolism; UMP biosynthesis via de novo pathway; orotate from (S)-dihydroorotate (quinone route): step 1/1. Functionally, catalyzes the conversion of dihydroorotate to orotate with quinone as electron acceptor. The polypeptide is Dihydroorotate dehydrogenase (quinone) (Pseudomonas putida (strain ATCC 47054 / DSM 6125 / CFBP 8728 / NCIMB 11950 / KT2440)).